Here is a 275-residue protein sequence, read N- to C-terminus: Transmembrane protein 45B (275 aa).

Helical transmembrane passes span 7-27, 47-67, 94-114, 116-136, 146-166, 180-200, and 212-232; these read HALP…KYPL, IVEA…EQFV, LFFA…HVPL, VDRL…YYHV, IHSL…LEVI, LIIL…PPFG, and LMFI…IVAV. Serine 270 and serine 272 each carry phosphoserine.

It belongs to the TMEM45 family. (Microbial infection) Interacts with sindbis virus nsP1 and nsP4; these interactions lead to viral RNA replication inhibition. As to quaternary structure, (Microbial infection) Interacts with chikungunya virus nsP1 and nsP4; these interactions lead to viral RNA replication inhibition.

The protein resides in the endosome membrane. Its subcellular location is the lysosome membrane. It localises to the golgi apparatus. The protein localises to the trans-Golgi network membrane. Plays a role in innate immunity. Mechanistically, promotes alphaviruses RNA degradation by interacting with the viral polymerase nsP4 and the mRNA-capping enzyme nsP1 and thereby interfering with the interaction between viral RNA and nsP1. The protein is Transmembrane protein 45B (TMEM45B) of Homo sapiens (Human).